Reading from the N-terminus, the 141-residue chain is Nucleoside diphosphate kinase (141 aa).

Residues lysine 11, phenylalanine 59, arginine 87, threonine 93, arginine 104, and asparagine 114 each coordinate ATP. Histidine 117 functions as the Pros-phosphohistidine intermediate in the catalytic mechanism.

Belongs to the NDK family. In terms of assembly, homotetramer. Requires Mg(2+) as cofactor.

Its subcellular location is the cytoplasm. The catalysed reaction is a 2'-deoxyribonucleoside 5'-diphosphate + ATP = a 2'-deoxyribonucleoside 5'-triphosphate + ADP. The enzyme catalyses a ribonucleoside 5'-diphosphate + ATP = a ribonucleoside 5'-triphosphate + ADP. In terms of biological role, major role in the synthesis of nucleoside triphosphates other than ATP. The ATP gamma phosphate is transferred to the NDP beta phosphate via a ping-pong mechanism, using a phosphorylated active-site intermediate. This is Nucleoside diphosphate kinase from Alkalilimnicola ehrlichii (strain ATCC BAA-1101 / DSM 17681 / MLHE-1).